Consider the following 124-residue polypeptide: Small ribosomal subunit protein uS12c (124 aa).

It belongs to the universal ribosomal protein uS12 family. In terms of assembly, part of the 30S ribosomal subunit.

The protein resides in the plastid. It localises to the chloroplast. With S4 and S5 plays an important role in translational accuracy. Located at the interface of the 30S and 50S subunits. The sequence is that of Small ribosomal subunit protein uS12c (rps12) from Oryza nivara (Indian wild rice).